We begin with the raw amino-acid sequence, 282 residues long: Succinate dehydrogenase [ubiquinone] iron-sulfur subunit, mitochondrial (282 aa).

The transit peptide at 1–21 directs the protein to the mitochondrion; it reads MLRGSTSVCRSLELVTQAARY. Residues 39 to 129 form the 2Fe-2S ferredoxin-type domain; it reads EIYRFNPEEP…TTKIYPLPHM (91 aa). C89, C94, C97, and C109 together coordinate [2Fe-2S] cluster. Positions 172-202 constitute a 4Fe-4S ferredoxin-type domain; it reads EQEKLDGLYECILCACCSASCPSYWWNADKY. The [4Fe-4S] cluster site is built by C182, C185, and C188. C192 is a [3Fe-4S] cluster binding site. W197 contributes to the a rhodoquinol binding site. W197 provides a ligand contact to a ubiquinone. [3Fe-4S] cluster-binding residues include C239 and C245. C249 is a [4Fe-4S] cluster binding site.

Belongs to the succinate dehydrogenase/fumarate reductase iron-sulfur protein family. In terms of assembly, component of the mitochondrial electron transport chain complex II composed of four subunits: a flavoprotein (Fp), an iron-sulfur protein (Ip), and a large cytochrome b (CybL) subunit and a small cytochrome b (CybS) subunit. There are 2 developmental stage-specific forms of complex II which have the Ip and CybL subunits in common. Complex II from the free-living larvae (aerobic environment) acts as a succinate dehydrogenase and is composed of the common subunit Ip and CybL and the stage specific subunits FpL and CybSL. Complex II from parasitic larvae and adults (anaerobic environment) acts as a fumarate reductase and is composed of the common subunit Ip and CybL and the stage specific subunits FpA and CybSA. [2Fe-2S] cluster is required as a cofactor. Requires [3Fe-4S] cluster as cofactor. [4Fe-4S] cluster serves as cofactor. In terms of tissue distribution, expressed in adult muscles (at protein level).

It localises to the mitochondrion inner membrane. It carries out the reaction a ubiquinone + succinate = a ubiquinol + fumarate. The catalysed reaction is a rhodoquinone + succinate = a rhodoquinol + fumarate. Its pathway is carbohydrate metabolism; tricarboxylic acid cycle; fumarate from succinate (eukaryal route): step 1/1. With respect to regulation, inhibited by the fungicide flutolanil. Functionally, iron-sulfur protein (Ip) subunit of the mitochondrial electron transport chain complex II which, together with the flavoprotein (Fp) subunit forms the catalytic core of the complex. During the free-living egg-larvae stages, which occur in an aerobic environment, complex II acts as a succinate dehydrogenase by transferring electrons from succinate to ubiquinone. During the parasitic larvae and adult stages, which occur in an anaerobic environment, complex II acts as a fumarate reductase by transferring electrons from rhodoquinol to fumarate. In Ascaris suum (Pig roundworm), this protein is Succinate dehydrogenase [ubiquinone] iron-sulfur subunit, mitochondrial.